The sequence spans 500 residues: ATP synthase subunit beta (500 aa).

157–164 (GGAGVGKT) provides a ligand contact to ATP.

This sequence belongs to the ATPase alpha/beta chains family. In terms of assembly, F-type ATPases have 2 components, CF(1) - the catalytic core - and CF(0) - the membrane proton channel. CF(1) has five subunits: alpha(3), beta(3), gamma(1), delta(1), epsilon(1). CF(0) has three main subunits: a(1), b(2) and c(9-12). The alpha and beta chains form an alternating ring which encloses part of the gamma chain. CF(1) is attached to CF(0) by a central stalk formed by the gamma and epsilon chains, while a peripheral stalk is formed by the delta and b chains.

It localises to the cell inner membrane. The catalysed reaction is ATP + H2O + 4 H(+)(in) = ADP + phosphate + 5 H(+)(out). Produces ATP from ADP in the presence of a proton gradient across the membrane. The catalytic sites are hosted primarily by the beta subunits. This is ATP synthase subunit beta from Salinibacter ruber (strain DSM 13855 / M31).